We begin with the raw amino-acid sequence, 270 residues long: Elongation factor Ts (270 aa).

Positions 81 to 84 are involved in Mg(2+) ion dislocation from EF-Tu; that stretch reads TDFV.

It belongs to the EF-Ts family.

The protein localises to the cytoplasm. Its function is as follows. Associates with the EF-Tu.GDP complex and induces the exchange of GDP to GTP. It remains bound to the aminoacyl-tRNA.EF-Tu.GTP complex up to the GTP hydrolysis stage on the ribosome. This chain is Elongation factor Ts, found in Wigglesworthia glossinidia brevipalpis.